The primary structure comprises 154 residues: Ribosomal RNA large subunit methyltransferase H (154 aa).

Residues Leu76, Gly103, and 122-127 each bind S-adenosyl-L-methionine; that span reads LSPLTL.

Belongs to the RNA methyltransferase RlmH family. As to quaternary structure, homodimer.

It localises to the cytoplasm. The enzyme catalyses pseudouridine(1915) in 23S rRNA + S-adenosyl-L-methionine = N(3)-methylpseudouridine(1915) in 23S rRNA + S-adenosyl-L-homocysteine + H(+). In terms of biological role, specifically methylates the pseudouridine at position 1915 (m3Psi1915) in 23S rRNA. In Wolinella succinogenes (strain ATCC 29543 / DSM 1740 / CCUG 13145 / JCM 31913 / LMG 7466 / NCTC 11488 / FDC 602W) (Vibrio succinogenes), this protein is Ribosomal RNA large subunit methyltransferase H.